A 210-amino-acid polypeptide reads, in one-letter code: Large ribosomal subunit protein uL4 (210 aa).

Over residues 44-54 the composition is skewed to polar residues; that stretch reads KRQGTASTLTR. The interval 44 to 85 is disordered; sequence KRQGTASTLTRSEVRGGGRKPYKQKGTGRARQGSIRTPLRPG. Residues 60–71 show a composition bias toward basic residues; that stretch reads GGRKPYKQKGTG.

It belongs to the universal ribosomal protein uL4 family. In terms of assembly, part of the 50S ribosomal subunit.

One of the primary rRNA binding proteins, this protein initially binds near the 5'-end of the 23S rRNA. It is important during the early stages of 50S assembly. It makes multiple contacts with different domains of the 23S rRNA in the assembled 50S subunit and ribosome. Its function is as follows. Forms part of the polypeptide exit tunnel. The sequence is that of Large ribosomal subunit protein uL4 from Prochlorococcus marinus (strain MIT 9301).